A 91-amino-acid polypeptide reads, in one-letter code: Putative septation protein SpoVG (91 aa).

It belongs to the SpoVG family.

Could be involved in septation. In Clostridium beijerinckii (strain ATCC 51743 / NCIMB 8052) (Clostridium acetobutylicum), this protein is Putative septation protein SpoVG.